The chain runs to 109 residues: Large ribosomal subunit protein uL22 (109 aa).

It belongs to the universal ribosomal protein uL22 family. In terms of assembly, part of the 50S ribosomal subunit.

Its function is as follows. This protein binds specifically to 23S rRNA; its binding is stimulated by other ribosomal proteins, e.g. L4, L17, and L20. It is important during the early stages of 50S assembly. It makes multiple contacts with different domains of the 23S rRNA in the assembled 50S subunit and ribosome. Functionally, the globular domain of the protein is located near the polypeptide exit tunnel on the outside of the subunit, while an extended beta-hairpin is found that lines the wall of the exit tunnel in the center of the 70S ribosome. In Wolinella succinogenes (strain ATCC 29543 / DSM 1740 / CCUG 13145 / JCM 31913 / LMG 7466 / NCTC 11488 / FDC 602W) (Vibrio succinogenes), this protein is Large ribosomal subunit protein uL22.